Consider the following 246-residue polypeptide: NLP effector protein Pc118548 (246 aa).

The signal sequence occupies residues 1–19; the sequence is MNFRAFLLAAIAGIATINA. The Hepta-peptide GHRHDWE motif signature appears at 122-128; that stretch reads GHRHYWE. The N-linked (GlcNAc...) asparagine glycan is linked to Asn141.

It belongs to the Necrosis inducing protein (NPP1) family.

Its subcellular location is the secreted. Secreted effector that contributes strongly to virulence during infection by P.capsici. Induces cell death in the Solanaceae, including Nicotiana benthamiana and hot pepper. The polypeptide is NLP effector protein Pc118548 (Phytophthora capsici).